An 86-amino-acid chain; its full sequence is Toxin CSTX-20 (86 aa).

In terms of tissue distribution, expressed by the venom gland.

Its subcellular location is the secreted. The chain is Toxin CSTX-20 from Cupiennius salei (American wandering spider).